Consider the following 367-residue polypeptide: Phosphoribosylaminoimidazole-succinocarboxamide synthase (367 aa).

This sequence belongs to the SAICAR synthetase family.

The catalysed reaction is 5-amino-1-(5-phospho-D-ribosyl)imidazole-4-carboxylate + L-aspartate + ATP = (2S)-2-[5-amino-1-(5-phospho-beta-D-ribosyl)imidazole-4-carboxamido]succinate + ADP + phosphate + 2 H(+). The protein operates within purine metabolism; IMP biosynthesis via de novo pathway; 5-amino-1-(5-phospho-D-ribosyl)imidazole-4-carboxamide from 5-amino-1-(5-phospho-D-ribosyl)imidazole-4-carboxylate: step 1/2. The chain is Phosphoribosylaminoimidazole-succinocarboxamide synthase from Shewanella sp. (strain MR-4).